The following is a 211-amino-acid chain: Urease accessory protein UreF (211 aa).

The disordered stretch occupies residues 71–93 (DDADRETDARTPAPAARHASRSQ).

It belongs to the UreF family. As to quaternary structure, ureD, UreF and UreG form a complex that acts as a GTP-hydrolysis-dependent molecular chaperone, activating the urease apoprotein by helping to assemble the nickel containing metallocenter of UreC. The UreE protein probably delivers the nickel.

The protein localises to the cytoplasm. In terms of biological role, required for maturation of urease via the functional incorporation of the urease nickel metallocenter. The chain is Urease accessory protein UreF from Mycobacterium tuberculosis (strain ATCC 25177 / H37Ra).